We begin with the raw amino-acid sequence, 320 residues long: Pseudouridine-5'-phosphate glycosidase (320 aa).

The Proton donor role is filled by Glu25. Positions 85 and 105 each coordinate substrate. Mn(2+) is bound at residue Asp137. A substrate-binding site is contributed by 139–141 (SAD). The Nucleophile role is filled by Lys158.

The protein belongs to the pseudouridine-5'-phosphate glycosidase family. In terms of assembly, homotrimer. Requires Mn(2+) as cofactor.

It carries out the reaction D-ribose 5-phosphate + uracil = psi-UMP + H2O. Catalyzes the reversible cleavage of pseudouridine 5'-phosphate (PsiMP) to ribose 5-phosphate and uracil. Functions biologically in the cleavage direction, as part of a pseudouridine degradation pathway. The chain is Pseudouridine-5'-phosphate glycosidase from Rhodospirillum centenum (strain ATCC 51521 / SW).